A 199-amino-acid polypeptide reads, in one-letter code: Imidazole glycerol phosphate synthase subunit HisH (199 aa).

The Glutamine amidotransferase type-1 domain maps to 3-199; sequence NITIIDTGCA…LKNFVEKVPF (197 aa). Cys78 functions as the Nucleophile in the catalytic mechanism. Residues His178 and Glu180 contribute to the active site.

Heterodimer of HisH and HisF.

The protein resides in the cytoplasm. It catalyses the reaction 5-[(5-phospho-1-deoxy-D-ribulos-1-ylimino)methylamino]-1-(5-phospho-beta-D-ribosyl)imidazole-4-carboxamide + L-glutamine = D-erythro-1-(imidazol-4-yl)glycerol 3-phosphate + 5-amino-1-(5-phospho-beta-D-ribosyl)imidazole-4-carboxamide + L-glutamate + H(+). The catalysed reaction is L-glutamine + H2O = L-glutamate + NH4(+). Its pathway is amino-acid biosynthesis; L-histidine biosynthesis; L-histidine from 5-phospho-alpha-D-ribose 1-diphosphate: step 5/9. IGPS catalyzes the conversion of PRFAR and glutamine to IGP, AICAR and glutamate. The HisH subunit catalyzes the hydrolysis of glutamine to glutamate and ammonia as part of the synthesis of IGP and AICAR. The resulting ammonia molecule is channeled to the active site of HisF. The sequence is that of Imidazole glycerol phosphate synthase subunit HisH from Haemophilus influenzae (strain 86-028NP).